The sequence spans 145 residues: MTDLAIIWTNGRGDIAQDGIDMLTDDSLTTDVTISLFTDRRALDSDTLPDGSDDRRGWWGDSYRDRPIGSRLWLLSREKATPDTLERARGYAEEALEWLKTAGRVSAINVRAEQLHQGWLYLYIALTLPDGSVIPYEFKAAFNGV.

Part of a complex composed of three DNA circularization protein N, three baseplate hub protein gp44 and three sub-complex wedge (made of two copies of each baseplate protein gp46, gp47 and gp48) that forms the baseplate.

It localises to the virion. It is found in the host cytoplasm. Functionally, component of the baseplate. Probable connector between the central and peripheral parts of the baseplate. Probably involved in tail assembly. This is Baseplate protein gp46 from Enterobacteriaceae (Bacteriophage Mu).